The chain runs to 458 residues: Repulsive guidance molecule A (458 aa).

The N-terminal stretch at 1-53 (MGGPGPRRAGTSRERLVVTGRAGWMGMGRGAGRSALGFWPTLAFLLCSFPAAT) is a signal peptide. The propeptide at 54–176 (SPCKILKCNS…NYTHCGLFGD (123 aa)) is removed in mature form. A compositionally biased stretch (polar residues) spans 121–133 (HNCSKDGPTSQPR). The disordered stretch occupies residues 121–149 (HNCSKDGPTSQPRLHTLPPAGDSQERSDS). N-linked (GlcNAc...) asparagine glycans are attached at residues Asn122 and Asn167. Intrachain disulfides connect Cys153/Cys234 and Cys171/Cys323. A glycan (N-linked (GlcNAc...) asparagine) is linked at Asn397. Ala433 carries GPI-anchor amidated alanine lipidation. A propeptide spans 434-458 (AGLPLAPQPLLGALILLLALFPVFC) (removed in mature form).

This sequence belongs to the repulsive guidance molecule (RGM) family. As to quaternary structure, interacts with NEO1, BMP2 and BMP4. Autocatalytically cleaved at low pH; the two chains remain linked via two disulfide bonds.

The protein resides in the cell membrane. In terms of biological role, member of the repulsive guidance molecule (RGM) family that performs several functions in the developing and adult nervous system. Regulates cephalic neural tube closure, inhibits neurite outgrowth and cortical neuron branching, and the formation of mature synapses. Binding to its receptor NEO1/neogenin induces activation of RHOA-ROCK1/Rho-kinase signaling pathway through UNC5B-ARHGEF12/LARG-PTK2/FAK1 cascade, leading to collapse of the neuronal growth cone and neurite outgrowth inhibition. Furthermore, RGMA binding to NEO1/neogenin leads to HRAS inactivation by influencing HRAS-PTK2/FAK1-AKT1 pathway. It also functions as a bone morphogenetic protein (BMP) coreceptor that may signal through SMAD1, SMAD5, and SMAD8. The chain is Repulsive guidance molecule A (RGMA) from Macaca fascicularis (Crab-eating macaque).